Consider the following 600-residue polypeptide: Mitoguardin 1 (600 aa).

Transmembrane regions (helical) follow at residues 15–32 (TYAVRVFALPVSWYYSLS) and 38–58 (PVAKKLFMVTAVSAVSVIFLA). 2 positions are modified to phosphoserine: Ser-257 and Ser-261.

Belongs to the mitoguardin family. As to quaternary structure, homodimer and heterodimer; forms heterodimers with MIGA2. Interacts with PLD6/MitoPLD.

It is found in the mitochondrion outer membrane. Functionally, regulator of mitochondrial fusion. Acts by forming homo- and heterodimers at the mitochondrial outer membrane and facilitating the formation of PLD6/MitoPLD dimers. May act by regulating phospholipid metabolism via PLD6/MitoPLD. This is Mitoguardin 1 from Mus musculus (Mouse).